A 250-amino-acid chain; its full sequence is Ubiquinone/menaquinone biosynthesis C-methyltransferase UbiE (250 aa).

Residues threonine 73, aspartate 94, 122–123 (NA), and serine 139 contribute to the S-adenosyl-L-methionine site.

The protein belongs to the class I-like SAM-binding methyltransferase superfamily. MenG/UbiE family.

The enzyme catalyses a 2-demethylmenaquinol + S-adenosyl-L-methionine = a menaquinol + S-adenosyl-L-homocysteine + H(+). The catalysed reaction is a 2-methoxy-6-(all-trans-polyprenyl)benzene-1,4-diol + S-adenosyl-L-methionine = a 5-methoxy-2-methyl-3-(all-trans-polyprenyl)benzene-1,4-diol + S-adenosyl-L-homocysteine + H(+). Its pathway is quinol/quinone metabolism; menaquinone biosynthesis; menaquinol from 1,4-dihydroxy-2-naphthoate: step 2/2. It functions in the pathway cofactor biosynthesis; ubiquinone biosynthesis. Functionally, methyltransferase required for the conversion of demethylmenaquinol (DMKH2) to menaquinol (MKH2) and the conversion of 2-polyprenyl-6-methoxy-1,4-benzoquinol (DDMQH2) to 2-polyprenyl-3-methyl-6-methoxy-1,4-benzoquinol (DMQH2). This Francisella tularensis subsp. holarctica (strain FTNF002-00 / FTA) protein is Ubiquinone/menaquinone biosynthesis C-methyltransferase UbiE.